We begin with the raw amino-acid sequence, 90 residues long: UPF0213 protein lmo0166 (90 aa).

Positions 5–80 (SEHFFYVLKC…KKLSRKNKDA (76 aa)) constitute a GIY-YIG domain.

Belongs to the UPF0213 family.

This Listeria monocytogenes serovar 1/2a (strain ATCC BAA-679 / EGD-e) protein is UPF0213 protein lmo0166.